The chain runs to 468 residues: 3-isopropylmalate dehydratase large subunit (468 aa).

Residues Cys-347, Cys-407, and Cys-410 each contribute to the [4Fe-4S] cluster site.

Belongs to the aconitase/IPM isomerase family. LeuC type 1 subfamily. Heterodimer of LeuC and LeuD. Requires [4Fe-4S] cluster as cofactor.

It carries out the reaction (2R,3S)-3-isopropylmalate = (2S)-2-isopropylmalate. It participates in amino-acid biosynthesis; L-leucine biosynthesis; L-leucine from 3-methyl-2-oxobutanoate: step 2/4. Catalyzes the isomerization between 2-isopropylmalate and 3-isopropylmalate, via the formation of 2-isopropylmaleate. The chain is 3-isopropylmalate dehydratase large subunit from Synechococcus elongatus (strain ATCC 33912 / PCC 7942 / FACHB-805) (Anacystis nidulans R2).